Consider the following 258-residue polypeptide: MDASYRRDGRGGGGGGGGGGSAPRSVEDIFKDFRARRTAILRALTHDVEDFYAQCDPEKENLCLYGYANEAWQVALPAEEVPTELPEPALGINFARDGMNRRDWLALVAVHSDSWLVSVAFYYAARLNRNDRKRLFGMMNDLPTVYEVVSGSRQSKERDRSGMDNSSRNKISSKHTSDVARVENNIKEEDEGYDEDDGDHSETLCGTCGGIYSADEFWIGCDVCERWYHGKCVKITPAKAESIKQYKCPSCSSKRPRQ.

Positions 1–10 (MDASYRRDGR) are enriched in basic and acidic residues. Disordered stretches follow at residues 1–24 (MDAS…SAPR) and 150–200 (SGSR…DGDH). Residues 11-21 (GGGGGGGGGGS) are compositionally biased toward gly residues. A compositionally biased stretch (basic and acidic residues) spans 175 to 187 (HTSDVARVENNIK). Residues 188–199 (EEDEGYDEDDGD) are compositionally biased toward acidic residues. A PHD-type zinc finger spans residues 202–254 (ETLCGTCGGIYSADEFWIGCDVCERWYHGKCVKITPAKAESIKQYKCPSCSSK).

This sequence belongs to the Alfin family. Interacts with H3K4me3 and to a lesser extent with H3K4me2.

The protein localises to the nucleus. Functionally, histone-binding component that specifically recognizes H3 tails trimethylated on 'Lys-4' (H3K4me3), which mark transcription start sites of virtually all active genes. This chain is PHD finger protein ALFIN-LIKE 1, found in Oryza sativa subsp. indica (Rice).